Consider the following 188-residue polypeptide: Surfactant protein C (188 aa).

Positions 1–23 (MDMGSKEALMESPPDYSAAPRGR) are excised as a propeptide. Residues Cys28 and Cys29 are each lipidated (S-palmitoyl cysteine). Residues 59-188 (HMSQKHTEMV…LCGEVPLIYI (130 aa)) constitute a propeptide that is removed on maturation. The BRICHOS domain occupies 94-188 (FPIGSTGIVT…LCGEVPLIYI (95 aa)). The cysteines at positions 121 and 180 are disulfide-linked. The segment at 144-164 (NPAEPPTQRGQDKGPAAGPAS) is disordered.

The protein resides in the secreted. It is found in the extracellular space. The protein localises to the surface film. Pulmonary surfactant associated proteins promote alveolar stability by lowering the surface tension at the air-liquid interface in the peripheral air spaces. This chain is Surfactant protein C (SFTPC), found in Oryctolagus cuniculus (Rabbit).